A 129-amino-acid chain; its full sequence is Small ribosomal subunit protein uS11 (129 aa).

It belongs to the universal ribosomal protein uS11 family. As to quaternary structure, part of the 30S ribosomal subunit. Interacts with proteins S7 and S18. Binds to IF-3.

Its function is as follows. Located on the platform of the 30S subunit, it bridges several disparate RNA helices of the 16S rRNA. Forms part of the Shine-Dalgarno cleft in the 70S ribosome. The sequence is that of Small ribosomal subunit protein uS11 from Dinoroseobacter shibae (strain DSM 16493 / NCIMB 14021 / DFL 12).